A 1123-amino-acid chain; its full sequence is Alpha-mannosidase E (1123 aa).

The signal sequence occupies residues 1–21; it reads MNKTKLIKIIFVIGVWILLST. 2 N-linked (GlcNAc...) asparagine glycosylation sites follow: asparagine 2 and asparagine 38. Over 22–1072 the chain is Extracellular; that stretch reads FIINIYNENF…KYNRPNHLAL (1051 aa). Residues histidine 67 and aspartate 69 each contribute to the Zn(2+) site. The N-linked (GlcNAc...) asparagine glycan is linked to asparagine 140. Aspartate 150 and histidine 409 together coordinate Zn(2+). Aspartate 150 serves as the catalytic Nucleophile. Residues asparagine 521, asparagine 675, asparagine 858, asparagine 887, asparagine 975, and asparagine 990 are each glycosylated (N-linked (GlcNAc...) asparagine). Residues 1073–1093 traverse the membrane as a helical segment; the sequence is ILSLSIGTPAGILIIVIALVV. Topologically, residues 1094–1123 are cytoplasmic; that stretch reads IYKKRKNRKTLTSSYSLLNLILKDRADSSP.

This sequence belongs to the glycosyl hydrolase 38 family. Requires Zn(2+) as cofactor.

Its subcellular location is the membrane. It catalyses the reaction Hydrolysis of terminal, non-reducing alpha-D-mannose residues in alpha-D-mannosides.. The protein is Alpha-mannosidase E (manE) of Dictyostelium discoideum (Social amoeba).